A 333-amino-acid chain; its full sequence is Cilia- and flagella-associated protein 119 (333 aa).

Residues 1 to 10 (MITPSSSQSL) show a composition bias toward polar residues. Disordered stretches follow at residues 1–70 (MITP…ANLF) and 309–333 (RLSS…TKTK). Serine 34 bears the Phosphoserine mark. Polar residues predominate over residues 44–58 (TDMQTESPAEATSSP). The stretch at 284-319 (IKSQLSKELRQLQQLVEERLKESEERLSSKLAALEQ) forms a coiled coil.

The protein localises to the cell projection. It is found in the cilium. Its subcellular location is the flagellum. The protein resides in the cytoplasmic vesicle. It localises to the secretory vesicle. The protein localises to the acrosome. It is found in the cytoplasm. The polypeptide is Cilia- and flagella-associated protein 119 (Mus musculus (Mouse)).